A 129-amino-acid chain; its full sequence is Iron-sulfur cluster assembly 1 homolog, mitochondrial (129 aa).

The transit peptide at 1–12 (MSASIARATVRA) directs the protein to the mitochondrion. Positions 57, 121, and 123 each coordinate Fe cation.

Belongs to the HesB/IscA family.

It localises to the mitochondrion. Involved in the maturation of mitochondrial 4Fe-4S proteins functioning late in the iron-sulfur cluster assembly pathway. Probably involved in the binding of an intermediate of Fe/S cluster assembly. This is Iron-sulfur cluster assembly 1 homolog, mitochondrial (isca1) from Danio rerio (Zebrafish).